We begin with the raw amino-acid sequence, 152 residues long: Interleukin-3 (152 aa).

An N-terminal signal peptide occupies residues 1–19 (MSCLPVLLLLQLLVSPGLQ). N-linked (GlcNAc...) asparagine glycosylation is found at N34 and N89. The cysteines at positions 35 and 103 are disulfide-linked.

Belongs to the IL-3 family. In terms of assembly, monomer. Activated T-cells, mast cells, natural killer cells.

It is found in the secreted. In terms of biological role, granulocyte/macrophage colony-stimulating factors are cytokines that act in hematopoiesis by controlling the production, differentiation, and function of 2 related white cell populations of the blood, the granulocytes and the monocytes-macrophages. Functionally, this CSF induces granulocytes, macrophages, mast cells, stem cells, erythroid cells, eosinophils and megakaryocytes. This is Interleukin-3 (IL3) from Hylobates lar (Lar gibbon).